Consider the following 347-residue polypeptide: 5-deoxyribose 1-phosphate isomerase (347 aa).

Substrate is bound by residues 48–50 (RGA), Arg91, and Gln198. Catalysis depends on Asp239, which acts as the Proton donor. Residue 249–250 (NK) participates in substrate binding.

It belongs to the EIF-2B alpha/beta/delta subunits family. DrdI subfamily.

The catalysed reaction is 5-deoxy-alpha-D-ribose 1-phosphate = 5-deoxy-D-ribulose 1-phosphate. The protein operates within carbohydrate degradation. Functionally, catalyzes the isomerization of 5-deoxy-alpha-D-ribose 1-phosphate to 5-deoxy-D-ribulose 1-phosphate, as part of a 5-deoxyribose salvage pathway that recycles this toxic radical SAM enzyme by-product to mainstream metabolites. The polypeptide is 5-deoxyribose 1-phosphate isomerase (Bacillus thuringiensis subsp. konkukian (strain 97-27)).